The primary structure comprises 413 residues: Chloramphenicol efflux pump Rv0191 (413 aa).

12 helical membrane-spanning segments follow: residues L23–A43, V55–P75, L89–F109, A110–I130, I150–L170, L176–L196, V226–I246, N256–A276, A286–F306, A312–V332, G353–L373, and L378–V398.

Belongs to the major facilitator superfamily.

The protein resides in the cell membrane. With respect to regulation, inhibited by the drug efflux pump inhibitors verapamil, resperine, piperine, chlorpromazine and carbonyl cyanide m-chlorophenylhydrazone (CCCP). Functionally, active efflux pump that plays an important role in chloramphenicol resistance. Overexpression causes pyrazinamide resistance. This chain is Chloramphenicol efflux pump Rv0191, found in Mycobacterium tuberculosis (strain ATCC 25618 / H37Rv).